The chain runs to 613 residues: MVEALNAVYPYDLALLPEDYEKTTAPDAVQAANAARPFLNPVYPYQQPVAGDFGFPIVMPPFFNSYDFTSIHGNTLSLRLNKPLKRTAKGLQLLLGSGLSVNADGQLESSEGISEADAPLQINDGVLQLSFGEGLSVNDHGELESKGKVEAVTLPLALQDHVMSLSFGQGLQVNDQGQLEALAMVHSTSAPLKVTNNNLELALGRGLIVDDQGQLRLAPNLLWPESPLAIEQGTNHLILFYNQSLDVEDGKLTLPEPFDPLTLDGGRLRMQLAPNSGLAVTEKGSLGINWGEGIQVKEQKITLKVTPANGLAVTEQGGLNINWGNGIKVDEQKVTLKTSNEFALTENGLYLTSPLNPIEVNQHGQLGIALGYGFHAHRGYLELTPQTLWTGLPIGNNGTFHTKQDCKIFLSLTRLGPMVHGTFMLQAPQYELTTNGMREITFSFNSTGGLEQPAPVTYWGALDPPPTAKAAEIENQKRVKKRAAPDPPVEPPPKRRGDLAVLFAKVAEQAMELAKEQAVQAQPPEHVNTDWADHMNLLRFMPNTLVYPTAATIAANLQFHDTRLSLRRATLKIRLNGSPDSAYQLGFMLELVGTQSASIVTDTISFWYYAEDY.

The disordered stretch occupies residues 474-496 (ENQKRVKKRAAPDPPVEPPPKRR).

This sequence belongs to the adenoviridae fiber family. Homotrimer. Interacts (via N-terminal tail region) with pentons.

Its subcellular location is the virion. It localises to the host nucleus. In terms of biological role, forms spikes that protrude from each vertex of the icosahedral capsid. Interacts with host receptor to provide virion initial attachment to target cell. Fiber proteins are shed during virus entry, when virus is still at the cell surface. In Murine adenovirus A serotype 1 (MAdV-1), this protein is Fiber protein.